A 255-amino-acid chain; its full sequence is 3-deoxy-manno-octulosonate cytidylyltransferase (255 aa).

It belongs to the KdsB family.

It is found in the cytoplasm. The enzyme catalyses 3-deoxy-alpha-D-manno-oct-2-ulosonate + CTP = CMP-3-deoxy-beta-D-manno-octulosonate + diphosphate. It functions in the pathway nucleotide-sugar biosynthesis; CMP-3-deoxy-D-manno-octulosonate biosynthesis; CMP-3-deoxy-D-manno-octulosonate from 3-deoxy-D-manno-octulosonate and CTP: step 1/1. Its pathway is bacterial outer membrane biogenesis; lipopolysaccharide biosynthesis. In terms of biological role, activates KDO (a required 8-carbon sugar) for incorporation into bacterial lipopolysaccharide in Gram-negative bacteria. The polypeptide is 3-deoxy-manno-octulosonate cytidylyltransferase (Pelobacter propionicus (strain DSM 2379 / NBRC 103807 / OttBd1)).